We begin with the raw amino-acid sequence, 206 residues long: Small ribosomal subunit protein uS4 (206 aa).

One can recognise an S4 RNA-binding domain in the interval 96 to 158 (SRLDNVVYRM…AKKQLRIQNA (63 aa)).

Belongs to the universal ribosomal protein uS4 family. As to quaternary structure, part of the 30S ribosomal subunit. Contacts protein S5. The interaction surface between S4 and S5 is involved in control of translational fidelity.

In terms of biological role, one of the primary rRNA binding proteins, it binds directly to 16S rRNA where it nucleates assembly of the body of the 30S subunit. Its function is as follows. With S5 and S12 plays an important role in translational accuracy. This Francisella tularensis subsp. mediasiatica (strain FSC147) protein is Small ribosomal subunit protein uS4.